The sequence spans 388 residues: Chorismate synthase (388 aa).

The NADP(+) site is built by R39 and R45. FMN contacts are provided by residues 130-132 (RSS), 251-252 (NA), G296, 311-315 (KPIPT), and R337.

This sequence belongs to the chorismate synthase family. Homotetramer. Requires FMNH2 as cofactor.

It carries out the reaction 5-O-(1-carboxyvinyl)-3-phosphoshikimate = chorismate + phosphate. It participates in metabolic intermediate biosynthesis; chorismate biosynthesis; chorismate from D-erythrose 4-phosphate and phosphoenolpyruvate: step 7/7. Functionally, catalyzes the anti-1,4-elimination of the C-3 phosphate and the C-6 proR hydrogen from 5-enolpyruvylshikimate-3-phosphate (EPSP) to yield chorismate, which is the branch point compound that serves as the starting substrate for the three terminal pathways of aromatic amino acid biosynthesis. This reaction introduces a second double bond into the aromatic ring system. The sequence is that of Chorismate synthase from Streptococcus sanguinis (strain SK36).